A 264-amino-acid polypeptide reads, in one-letter code: Cell cycle regulator CcrZ (264 aa).

Positions 32, 70, and 73 each coordinate ATP. The short motif at 157-164 (HGDVRHSN) is the Brenner's motif [HXDhX3N] element. Catalysis depends on Asp-159, which acts as the Proton acceptor. The APH motif lies at 173 to 196 (IYLVDWDSVRLTDRMFDVAHMLCH).

Belongs to the aminoglycoside phosphotransferase family. Monomer in solution. Interacts with DnaA (via domains I (1-82) and III (111-326)). Interacts with DnaB. Interacts with FtsZ; the interaction is direct and ensures correct localization during the cell cycle.

Its subcellular location is the cytoplasm. It catalyses the reaction D-ribose + ATP = D-ribose 5-phosphate + ADP + H(+). It carries out the reaction 2-deoxy-D-ribose + ATP = 2-deoxy-D-ribose 5-phosphate + ADP + H(+). Functionally, plays a role in cell cycle regulation and chromosome integrity. Activates DnaA-dependent chromosomal DNA replication initiation ensuring that the chromosome is replicated at the right time during the cell cycle. May regulate replication initiation through phosphorylation of a possible second messenger or metabolite, and by interacting with replication initiation proteins. Has ATPase activity with D-ribose and 2-deoxy-D-ribose in vitro, but not with choline. Involved in DNA damage response. In Streptococcus pneumoniae serotype 2 (strain D39 / NCTC 7466), this protein is Cell cycle regulator CcrZ.